The following is a 159-amino-acid chain: Thymic stromal lymphopoietin (159 aa).

The first 28 residues, 1–28, serve as a signal peptide directing secretion; it reads MFPFALLYVLSVSFRKIFILQLVGLVLT. Disulfide bonds link C34–C110, C69–C75, and C90–C137. N64 carries N-linked (GlcNAc...) asparagine glycosylation. N-linked (GlcNAc...) asparagine glycosylation occurs at N119.

As to quaternary structure, interacts with a receptor composed of CRLF2 and IL7R. Binding of TSLP to CRLF2/TSLPR is a mechanistic prerequisite for recruitment of IL7R to the high-affinity ternary complex. In terms of tissue distribution, isoform 1 is expressed in a number of tissues including heart, liver and prostate. Isoform 2 is the predominant form in keratinocytes of oral mucosa, skin and in salivary glands. It is secreted into saliva.

It localises to the secreted. Cytokine that induces the release of T-cell-attracting chemokines from monocytes and, in particular, enhances the maturation of CD11c(+) dendritic cells. Can induce allergic inflammation by directly activating mast cells. Functionally, may act as an antimicrobial peptide in the oral cavity and on the skin. The chain is Thymic stromal lymphopoietin (TSLP) from Homo sapiens (Human).